The chain runs to 512 residues: D-alanine--D-alanyl carrier protein ligase (512 aa).

152-153 lines the ATP pocket; it reads TS. D-alanine is bound at residue Asp-199. 294–299 is a binding site for ATP; it reads NAYGPT. D-alanine is bound at residue Val-303. ATP-binding positions include Asp-385, 397 to 400, and Lys-499; that span reads YGGR. Lys-499 contributes to the D-alanine binding site.

Belongs to the ATP-dependent AMP-binding enzyme family. DltA subfamily.

It is found in the cytoplasm. It carries out the reaction holo-[D-alanyl-carrier protein] + D-alanine + ATP = D-alanyl-[D-alanyl-carrier protein] + AMP + diphosphate. It participates in cell wall biogenesis; lipoteichoic acid biosynthesis. Catalyzes the first step in the D-alanylation of lipoteichoic acid (LTA), the activation of D-alanine and its transfer onto the D-alanyl carrier protein (Dcp) DltC. In an ATP-dependent two-step reaction, forms a high energy D-alanyl-AMP intermediate, followed by transfer of the D-alanyl residue as a thiol ester to the phosphopantheinyl prosthetic group of the Dcp. D-alanylation of LTA plays an important role in modulating the properties of the cell wall in Gram-positive bacteria, influencing the net charge of the cell wall. The polypeptide is D-alanine--D-alanyl carrier protein ligase (Streptococcus pyogenes serotype M49 (strain NZ131)).